The primary structure comprises 109 residues: MRLAPIKLVVNYYVLFGKSLNQEKENLIEMKGVITQCLSNGMFRVKLENGFKVIAHISGKIRRNFIRILLGDSVIVELSPYDLTRGRIIYRLKPTNSSTETLRFNTNLK.

The region spanning 18-93 (KSLNQEKENL…TRGRIIYRLK (76 aa)) is the S1-like domain.

Belongs to the IF-1 family. As to quaternary structure, component of the 30S ribosomal translation pre-initiation complex which assembles on the 30S ribosome in the order IF-2 and IF-3, IF-1 and N-formylmethionyl-tRNA(fMet); mRNA recruitment can occur at any time during PIC assembly.

It is found in the plastid. The protein resides in the chloroplast. One of the essential components for the initiation of protein synthesis. Stabilizes the binding of IF-2 and IF-3 on the 30S subunit to which N-formylmethionyl-tRNA(fMet) subsequently binds. Helps modulate mRNA selection, yielding the 30S pre-initiation complex (PIC). Upon addition of the 50S ribosomal subunit IF-1, IF-2 and IF-3 are released leaving the mature 70S translation initiation complex. In Tupiella akineta (Green alga), this protein is Translation initiation factor IF-1, chloroplastic.